Reading from the N-terminus, the 576-residue chain is Proline--tRNA ligase (576 aa).

The protein belongs to the class-II aminoacyl-tRNA synthetase family. ProS type 1 subfamily. Homodimer.

The protein resides in the cytoplasm. It carries out the reaction tRNA(Pro) + L-proline + ATP = L-prolyl-tRNA(Pro) + AMP + diphosphate. Catalyzes the attachment of proline to tRNA(Pro) in a two-step reaction: proline is first activated by ATP to form Pro-AMP and then transferred to the acceptor end of tRNA(Pro). As ProRS can inadvertently accommodate and process non-cognate amino acids such as alanine and cysteine, to avoid such errors it has two additional distinct editing activities against alanine. One activity is designated as 'pretransfer' editing and involves the tRNA(Pro)-independent hydrolysis of activated Ala-AMP. The other activity is designated 'posttransfer' editing and involves deacylation of mischarged Ala-tRNA(Pro). The misacylated Cys-tRNA(Pro) is not edited by ProRS. The polypeptide is Proline--tRNA ligase (Psychrobacter sp. (strain PRwf-1)).